We begin with the raw amino-acid sequence, 364 residues long: Spermidine/putrescine import ATP-binding protein PotA (364 aa).

The ABC transporter domain maps to L5 to I235. G37–T44 is a binding site for ATP.

Belongs to the ABC transporter superfamily. Spermidine/putrescine importer (TC 3.A.1.11.1) family. In terms of assembly, the complex is composed of two ATP-binding proteins (PotA), two transmembrane proteins (PotB and PotC) and a solute-binding protein (PotD).

Its subcellular location is the cell membrane. The enzyme catalyses ATP + H2O + polyamine-[polyamine-binding protein]Side 1 = ADP + phosphate + polyamineSide 2 + [polyamine-binding protein]Side 1.. Its function is as follows. Part of the ABC transporter complex PotABCD involved in spermidine/putrescine import. Responsible for energy coupling to the transport system. In Staphylococcus epidermidis (strain ATCC 12228 / FDA PCI 1200), this protein is Spermidine/putrescine import ATP-binding protein PotA.